Reading from the N-terminus, the 706-residue chain is Probable rhamnogalacturonate lyase B (706 aa).

Residues 1-19 (MRLLHPLIPASLLLTLTSA) form the signal peptide. 10 N-linked (GlcNAc...) asparagine glycosylation sites follow: asparagine 27, asparagine 40, asparagine 143, asparagine 239, asparagine 285, asparagine 380, asparagine 495, asparagine 569, asparagine 597, and asparagine 638.

It belongs to the polysaccharide lyase 4 family.

It is found in the secreted. The catalysed reaction is Endotype eliminative cleavage of L-alpha-rhamnopyranosyl-(1-&gt;4)-alpha-D-galactopyranosyluronic acid bonds of rhamnogalacturonan I domains in ramified hairy regions of pectin leaving L-rhamnopyranose at the reducing end and 4-deoxy-4,5-unsaturated D-galactopyranosyluronic acid at the non-reducing end.. Its function is as follows. Pectinolytic enzymes consist of four classes of enzymes: pectin lyase, polygalacturonase, pectin methylesterase and rhamnogalacturonase. Degrades the rhamnogalacturonan I (RG-I) backbone of pectin. This Aspergillus niger (strain ATCC MYA-4892 / CBS 513.88 / FGSC A1513) protein is Probable rhamnogalacturonate lyase B (rglB).